The primary structure comprises 129 residues: Small ribosomal subunit protein uS9 (129 aa).

Belongs to the universal ribosomal protein uS9 family.

This chain is Small ribosomal subunit protein uS9, found in Helicobacter pylori (strain P12).